A 1446-amino-acid polypeptide reads, in one-letter code: Major viral transcription factor ICP4 homolog (1446 aa).

4 disordered regions span residues 25-59 (AEEEGIASGPDGGSQGSRRRGSSGEDLLFGPGGLF), 73-493 (AAAG…PPAD), 801-987 (PGPA…HTPR), and 1385-1446 (THRP…LLLR). Positions 73 to 94 (AAAGATRPPRPPSAQQQQQPRR) are enriched in low complexity. The span at 101 to 112 (VLDDEDEEEDEP) shows a compositional bias: acidic residues. Low complexity-rich tracts occupy residues 166-189 (RSSPSAASPASSSGSPGPSAAPRR) and 216-241 (PAAVAAAPARRGPASPASPAAGPVSA). A compositionally biased stretch (basic and acidic residues) spans 262 to 277 (REPLLDEPAAARRLDP). 2 stretches are compositionally biased toward low complexity: residues 284 to 306 (SPVSSNPNSNSNSTTTVAVETVA) and 345 to 397 (GFSS…SSSS). Residues 415-426 (GPPPSPPAPAAA) show a composition bias toward pro residues. A compositionally biased stretch (low complexity) spans 427-442 (PRPSASSASSSAAASP). Pro residues predominate over residues 803 to 815 (PAEPAPGLPPLWP). A compositionally biased stretch (low complexity) spans 827 to 877 (PAAAGAPSGLPGSGPSSPASTKSSSSTKSSSSTKSGLSGSSGYASSPAAGP). A compositionally biased stretch (basic residues) spans 883-892 (RRKKKRRAPG). Positions 933 to 952 (LGLGPAPDPAPALLSSSSSS) are enriched in low complexity.

The protein belongs to the herpesviridae ICP4 family. In terms of processing, a long stretch of serine residues may be a major site of phosphorylation.

Its subcellular location is the host nucleus. Functionally, this IE protein is a multifunctional protein capable of migrating to the nucleus, binding to DNA, trans-activating other viral genes, and autoregulating its own synthesis. In Suid herpesvirus 1 (strain Kaplan) (SuHV-1), this protein is Major viral transcription factor ICP4 homolog (IE).